The sequence spans 240 residues: Mediator of RNA polymerase II transcription subunit 19-B (240 aa).

Polar residues predominate over residues 1 to 14 (MTEIFSSLYGQPDS). Disordered stretches follow at residues 1-29 (MTEI…GSGK) and 168-240 (PKKK…SSLR). Basic residues-rich tracts occupy residues 168–180 (PKKK…KHHR) and 209–221 (KKKK…KKNR).

The protein belongs to the Mediator complex subunit 19 family. Component of the Mediator complex.

The protein resides in the nucleus. Component of the Mediator complex, a coactivator involved in the regulated transcription of nearly all RNA polymerase II-dependent genes. Mediator functions as a bridge to convey information from gene-specific regulatory proteins to the basal RNA polymerase II transcription machinery. Mediator is recruited to promoters by direct interactions with regulatory proteins and serves as a scaffold for the assembly of a functional preinitiation complex with RNA polymerase II and the general transcription factors. The polypeptide is Mediator of RNA polymerase II transcription subunit 19-B (med19b) (Danio rerio (Zebrafish)).